Consider the following 8892-residue polypeptide: Nonribosomal peptide synthetase 32 (8892 aa).

The Carrier 1 domain occupies 12-85; it reads EPSKLVLGRV…QLAESIAQQN (74 aa). Residue Ser-46 is modified to O-(pantetheine 4'-phosphoryl)serine. The segment at 88-112 is disordered; the sequence is AGNGVNGHANGNGMNGNGLHNEATI. Positions 93–108 are enriched in low complexity; it reads NGHANGNGMNGNGLHN. A condensation 1 region spans residues 567 to 956; that stretch reads PTSANVPRRV…EGVDLSVRDF (390 aa). Residues 989 to 1386 form an adenylation 1 region; it reads KMAEQPEALA…GRIDSQIKIR (398 aa). The 77-residue stretch at 1523–1599 folds into the Carrier 2 domain; the sequence is ISATAVEREL…ELAAEVQATQ (77 aa). Position 1560 is an O-(pantetheine 4'-phosphoryl)serine (Ser-1560). Positions 1609–2039 are epimerization 1; it reads GAIALSPIQQ…YGQTVKSLVN (431 aa). The interval 2083–2518 is condensation 2; sequence EDILPCSPIQ…LLLPAEEAKL (436 aa). An adenylation 2 region spans residues 2543–2934; that stretch reads SQPEALAVSA…GRRDTQVKIR (392 aa). The Carrier 3 domain occupies 3061 to 3137; that stretch reads SSATPIEREL…ELAANSQTGR (77 aa). At Ser-3098 the chain carries O-(pantetheine 4'-phosphoryl)serine. Positions 3153 to 3590 are epimerization 2; sequence LSPIQQMFFD…GDTVKTLVEE (438 aa). Residues 3634–4061 form a condensation 3 region; sequence EDILPCSAIQ…NVDRPLRELT (428 aa). Residues 4098-4488 are adenylation 3; sequence TLPEALAISS…GRIDSQIKIR (391 aa). The Carrier 4 domain maps to 4627-4703; sequence APTTDLERKL…DLSRVVEEKC (77 aa). The residue at position 4664 (Ser-4664) is an O-(pantetheine 4'-phosphoryl)serine. The segment at 4760–5181 is condensation 4; it reads EDVYPCSPMQ…LLTDEDCDQL (422 aa). The segment at 5205–5605 is adenylation 4; that stretch reads TSYPTAPAIS…GRRDTQVKIR (401 aa). The region spanning 5745-5821 is the Carrier 5 domain; sequence MPTTPMEQKL…DLAEAMEEKG (77 aa). Ser-5782 is modified (O-(pantetheine 4'-phosphoryl)serine). The condensation 5 stretch occupies residues 5868-6285; sequence EDVYPCSPLQ…LLSPGQMAQI (418 aa). Positions 6307–6700 are adenylation 5; that stretch reads QMTTRPAATA…GRIDTQIKIR (394 aa). The Carrier 6 domain occupies 6834–6911; that stretch reads ELTTTIERQL…ELATQTQTTE (78 aa). Position 6872 is an O-(pantetheine 4'-phosphoryl)serine (Ser-6872). Residues 6923 to 7360 are epimerization 3; sequence NFQLSPIQQM…SYSCAIESLV (438 aa). The tract at residues 7403–7834 is condensation 6; it reads VQDILPCSPI…LLPAGDANQI (432 aa). The adenylation 6 stretch occupies residues 7855–8253; it reads QQMAAHPTAQ…LDRIGTQVKI (399 aa). Residues 8380-8456 form the Carrier 7 domain; that stretch reads APVGRNEEIL…AMAARVTADI (77 aa). O-(pantetheine 4'-phosphoryl)serine is present on Ser-8417. Residues 8490-8878 form a condensation 7 region; it reads HFAFDATGPC…EIIEDSGCNV (389 aa).

This sequence belongs to the NRP synthetase family.

It functions in the pathway secondary metabolite biosynthesis. Nonribosomal peptide synthetase; part of the gene cluster that mediates the biosynthesis of the lipopeptides W493 A and B. W493 A and B consist of six amino acid residues D-allo-thr, L-Ala, D-Ala, L-Gln, D-Tyr, and L-Val/L-Ile linked to a 3-hydroxy-4-methyltetradecanoic acid polyketide chain. The biosynthesis starts with formation of the linear polyketide chain by the highly reducing polyketide synthase PKS40. The gene cluster contains a putative acyl-CoA ligase (FPSE_09184) for formation of a CoA thioester polyketide. The thiol bond could be hydrolyzed by the putative thioesterase (FPSE_09186) and then accepted by the first T domain in module 1 of NRPS32. The second T domain is responsible for accepting a threonine, which is adenylated by the A domain and epimerized to the D-allo-threonine formed by the E domain. The five successive modules incorporate Ala, Ala, Gln, Tyr, and Val/Ile into the final product, which is released by cyclization. The polypeptide is Nonribosomal peptide synthetase 32 (Fusarium pseudograminearum (strain CS3096) (Wheat and barley crown-rot fungus)).